The primary structure comprises 332 residues: Heptahelical transmembrane protein 1 (332 aa).

Positions 1–52 are disordered; it reads MDQNGHNDEAETVSCGNGNCKSKIVPGDDHGGDESSGTKRRKKRKTQQKTMK. At 1–98 the chain is on the cytoplasmic side; sequence MDQNGHNDEA…VFSFHNESLN (98 aa). A compositionally biased stretch (basic and acidic residues) spans 26–37; the sequence is PGDDHGGDESSG. The span at 38 to 52 shows a compositional bias: basic residues; the sequence is TKRRKKRKTQQKTMK. Residues 99–119 form a helical membrane-spanning segment; the sequence is VWTHLIGFIFFVALTVANIIH. Over 120–138 the chain is Extracellular; sequence HDGFFPVDAKSPGNVTRWP. Residues 139-159 form a helical membrane-spanning segment; it reads FFVFLGGSMFCLLASSICHLF. Residues 160–172 lie on the Cytoplasmic side of the membrane; it reads CCHSKELNVFLLR. A helical membrane pass occupies residues 173–193; sequence IDYAGITAMIITSFFPPIFYI. At 194 to 199 the chain is on the extracellular side; sequence FQCTPR. Residues 200–220 form a helical membrane-spanning segment; the sequence is WYFIYLAGITSMGIFTIITLF. The Cytoplasmic portion of the chain corresponds to 221–233; the sequence is TPSLSAPKYRAFR. The chain crosses the membrane as a helical span at residues 234–254; the sequence is ALLFASMGLFGIVPAAHALVV. Topologically, residues 255-262 are extracellular; the sequence is NWGNPQRN. A helical membrane pass occupies residues 263–283; the sequence is VTLVYELLMAVFYLVGTGFYV. The Cytoplasmic portion of the chain corresponds to 284-303; it reads GRVPERLKPGWFDRVGHSHQ. A helical transmembrane segment spans residues 304–324; that stretch reads IFHVFVLLGALSHYAAALLFL. Over 325–332 the chain is Extracellular; it reads DWRDHVGC.

This sequence belongs to the ADIPOR family. As to quaternary structure, interacts (via N-terminus) with SCRM/ICE1. As to expression, expressed in roots, hypocotyls, vasculature of cotyledons and leaves, hydathodes and guard cells. In reproductive organs, expressed in trichomes, veins of sepals, stamens and stigmata of pistils.

The protein resides in the membrane. May act as a negative regulator of abscisic acid (ABA)-mediated osmotic stress signaling and function in cross-talk between cold and osmotic signaling. The protein is Heptahelical transmembrane protein 1 (HHP1) of Arabidopsis thaliana (Mouse-ear cress).